The sequence spans 447 residues: MREIVHLQTGQCGNQIGAAFWQTISGEHGLDGSGVYNGTSDLQLERTNVYFNEASGNKYVPRAVLVDLEPGTMDAVRAGPFGQLFRPDNFVFGQSGAGNNWAKGHYTEGAELVDQVLDVVRREAEGCDCLQGFQITHSLGGGTGAGMGTLLISKIREEFPDRMMATFSVVPSPKVSDTVVEPYNATLSVHQLVENSDETFCIDNEALYEICMRTLKLSNPSYGDLNHLVSAVMSGVTTCLRFPGQLNSDLRKLAVNMVPFPRLHFFMVGFAPLTSRGAHSFRAVTVPELTQQMYDPKNMMAASDFRNGRYLTCSAIFRGKVSMKEVEDQMRNVQNKNSAYFVEWIPNNVQTALCSIPPRGLKMSSTFVGNSTSIQELFKRVGDQFTAMFRRKAFLHWYTGEGMDEMEFTEAESNMNDLVHEYQQYQDASISEGEEDYEEEPQVENEE.

8 residues coordinate GTP: Q11, E69, S138, G142, T143, G144, N204, and N226. E69 contributes to the Mg(2+) binding site. The segment at 424-447 is disordered; sequence QYQDASISEGEEDYEEEPQVENEE. Residues 432-447 are compositionally biased toward acidic residues; that stretch reads EGEEDYEEEPQVENEE.

The protein belongs to the tubulin family. In terms of assembly, dimer of alpha and beta chains. A typical microtubule is a hollow water-filled tube with an outer diameter of 25 nm and an inner diameter of 15 nM. Alpha-beta heterodimers associate head-to-tail to form protofilaments running lengthwise along the microtubule wall with the beta-tubulin subunit facing the microtubule plus end conferring a structural polarity. Microtubules usually have 13 protofilaments but different protofilament numbers can be found in some organisms and specialized cells. It depends on Mg(2+) as a cofactor.

The protein resides in the cytoplasm. The protein localises to the cytoskeleton. Tubulin is the major constituent of microtubules, a cylinder consisting of laterally associated linear protofilaments composed of alpha- and beta-tubulin heterodimers. Microtubules grow by the addition of GTP-tubulin dimers to the microtubule end, where a stabilizing cap forms. Below the cap, tubulin dimers are in GDP-bound state, owing to GTPase activity of alpha-tubulin. In Uncinula necator (Grape powdery mildew), this protein is Tubulin beta chain.